Reading from the N-terminus, the 390-residue chain is tRNA-specific 2-thiouridylase MnmA (390 aa).

ATP contacts are provided by residues 29-36 (GLSGGVDS) and leucine 55. The active-site Nucleophile is cysteine 116. The cysteines at positions 116 and 225 are disulfide-linked. Glycine 141 provides a ligand contact to ATP. The interval 175-177 (KDQ) is interaction with tRNA. Catalysis depends on cysteine 225, which acts as the Cysteine persulfide intermediate. Residues 330 to 331 (RY) are interaction with tRNA.

Belongs to the MnmA/TRMU family.

The protein localises to the cytoplasm. It catalyses the reaction S-sulfanyl-L-cysteinyl-[protein] + uridine(34) in tRNA + AH2 + ATP = 2-thiouridine(34) in tRNA + L-cysteinyl-[protein] + A + AMP + diphosphate + H(+). Catalyzes the 2-thiolation of uridine at the wobble position (U34) of tRNA, leading to the formation of s(2)U34. The protein is tRNA-specific 2-thiouridylase MnmA of Prochlorococcus marinus (strain MIT 9515).